The following is a 38-amino-acid chain: IFINVKCSLPQQCLRPCKDRFGQHAGGKCINGKCKCYP.

Intrachain disulfides connect Cys7–Cys29, Cys13–Cys34, and Cys17–Cys36.

As to expression, expressed by the venom gland.

Its subcellular location is the secreted. Its function is as follows. Blocks human voltage-gated potassium (Kv) channel Kv1.2/KCNA2. Does not inhibit human Kv1.1/KCNA1 at 100nM concentration. This Centruroides bonito (Scorpion) protein is Potassium channel toxin alpha-KTx 2.10.